The primary structure comprises 54 residues: UPF0391 membrane protein Sde_0270 (54 aa).

The next 2 membrane-spanning stretches (helical) occupy residues 6-26 and 29-49; these read IVFL…IAGV and GIAK…LVIG.

Belongs to the UPF0391 family.

It localises to the cell membrane. The chain is UPF0391 membrane protein Sde_0270 from Saccharophagus degradans (strain 2-40 / ATCC 43961 / DSM 17024).